Reading from the N-terminus, the 325-residue chain is Phospho-N-acetylmuramoyl-pentapeptide-transferase (325 aa).

10 helical membrane-spanning segments follow: residues 3–23, 48–68, 79–99, 106–126, 136–156, 174–194, 199–219, 223–243, 246–266, and 298–318; these read LMIY…PILI, GTPT…VFVV, AIFA…LKII, LKAY…GFYA, IIVP…PFII, GLAT…SYAT, LAVF…YNAY, VFMG…VAMM, LPLI…SVIL, and IVSI…LSLI.

Belongs to the glycosyltransferase 4 family. MraY subfamily. It depends on Mg(2+) as a cofactor.

The protein localises to the cell membrane. The catalysed reaction is UDP-N-acetyl-alpha-D-muramoyl-L-alanyl-gamma-D-glutamyl-meso-2,6-diaminopimeloyl-D-alanyl-D-alanine + di-trans,octa-cis-undecaprenyl phosphate = di-trans,octa-cis-undecaprenyl diphospho-N-acetyl-alpha-D-muramoyl-L-alanyl-D-glutamyl-meso-2,6-diaminopimeloyl-D-alanyl-D-alanine + UMP. The protein operates within cell wall biogenesis; peptidoglycan biosynthesis. Its function is as follows. Catalyzes the initial step of the lipid cycle reactions in the biosynthesis of the cell wall peptidoglycan: transfers peptidoglycan precursor phospho-MurNAc-pentapeptide from UDP-MurNAc-pentapeptide onto the lipid carrier undecaprenyl phosphate, yielding undecaprenyl-pyrophosphoryl-MurNAc-pentapeptide, known as lipid I. The polypeptide is Phospho-N-acetylmuramoyl-pentapeptide-transferase (Clostridium novyi (strain NT)).